A 2624-amino-acid polypeptide reads, in one-letter code: Highly reducing polyketide synthase ALT1 (2624 aa).

One can recognise a Ketosynthase family 3 (KS3) domain in the interval 28–449; it reads VLPLAIVGMG…GSNAHCILES (422 aa). The active-site For beta-ketoacyl synthase activity is cysteine 200. A disordered region spans residues 289–308; that stretch reads VRGTSSNSDGKTPGMSMPSS. Residues histidine 335 and histidine 372 each act as for beta-ketoacyl synthase activity in the active site. Over residues 523–544 the composition is skewed to polar residues; it reads ESYSNHHTLTETTNPSNNTATN. The tract at residues 523 to 545 is disordered; that stretch reads ESYSNHHTLTETTNPSNNTATNG. A malonyl-CoA:ACP transacylase (MAT) domain region spans residues 639 to 945; it reads VFTGQGAQWA…GYTPAMIRGK (307 aa). The tract at residues 1009 to 1140 is N-terminal hotdog fold; it reads HELLGSQTLE…GQVRPGRDAH (132 aa). The tract at residues 1009–1301 is dehydratase (DH) domain; that stretch reads HELLGSQTLE…LEGGKFSPIE (293 aa). The PKS/mFAS DH domain occupies 1009-1306; that stretch reads HELLGSQTLE…FSPIEVDDGI (298 aa). Histidine 1041 functions as the Proton acceptor; for dehydratase activity in the catalytic mechanism. The interval 1157–1306 is C-terminal hotdog fold; the sequence is QYPRPVDSLY…FSPIEVDDGI (150 aa). The active-site Proton donor; for dehydratase activity is the aspartate 1217. A methyltransferase (CMet) domain region spans residues 1493-1599; it reads LEIGAGTGGA…RKLLAPEGYL (107 aa). Residues 1895–2205 form an enoyl reductase (ER) (ER) domain region; sequence GLLQTLKWVD…KGTHLGKIVV (311 aa). The ketoreductase (KR) domain stretch occupies residues 2230–2509; it reads TYVLVGGLGG…DSDALRFFIT (280 aa). Positions 2522 to 2600 constitute a Carrier domain; it reads ASLDLVTRTI…GLAKLILDAL (79 aa). Residue serine 2559 is modified to O-(pantetheine 4'-phosphoryl)serine.

The protein operates within mycotoxin biosynthesis. In terms of biological role, highly reducing polyketide synthase; part of the gene cluster that mediates the biosynthesis of the host-selective toxins (HSTs) AAL-toxins, sphinganine-analog mycotoxins responsible for Alternaria stem canker on tomato by the tomato pathotype. The biosynthesis starts with the polyketide synthase ALT1-catalyzed C-16 carbon chain assembly from one starter acetyl-CoA unit with malonyl-CoA extender units. ALT1 also selectively transfers methyl groups at the first and the third cycle of chain elongation for AAL toxin. The C-16 polyketide chain is released from the enzyme by a nucleophilic attack of a carbanion, which is derived from R-carbon of glycin by decarboxylation, on the carbonyl carbon of polyketide acyl chain. This step is probably catalyzed by a pyridoxal 5'-phosphate-dependent aminoacyl transferase ALT4. The respective functions of the other enzymes encoded by the cluster have still to be elucidated. The sphingosine N-acyltransferase-like protein ALT7 seems not to act as a resistance/self-tolerance factor against the toxin in the toxin biosynthetic gene cluster, contrary to what is expected. This is Highly reducing polyketide synthase ALT1 from Alternaria alternata (Alternaria rot fungus).